The chain runs to 162 residues: Transcription elongation factor GreA (162 aa).

Positions 45 to 74 (ENAEYEAAREKQAFIEGRIKELEDMTARAE) form a coiled coil.

Belongs to the GreA/GreB family.

Functionally, necessary for efficient RNA polymerase transcription elongation past template-encoded arresting sites. The arresting sites in DNA have the property of trapping a certain fraction of elongating RNA polymerases that pass through, resulting in locked ternary complexes. Cleavage of the nascent transcript by cleavage factors such as GreA or GreB allows the resumption of elongation from the new 3'terminus. GreA releases sequences of 2 to 3 nucleotides. This chain is Transcription elongation factor GreA, found in Rickettsia felis (strain ATCC VR-1525 / URRWXCal2) (Rickettsia azadi).